The primary structure comprises 198 residues: Probable chemoreceptor glutamine deamidase CheD (198 aa).

This sequence belongs to the CheD family.

The enzyme catalyses L-glutaminyl-[protein] + H2O = L-glutamyl-[protein] + NH4(+). Probably deamidates glutamine residues to glutamate on methyl-accepting chemotaxis receptors (MCPs), playing an important role in chemotaxis. The protein is Probable chemoreceptor glutamine deamidase CheD of Xanthomonas euvesicatoria pv. vesicatoria (strain 85-10) (Xanthomonas campestris pv. vesicatoria).